Reading from the N-terminus, the 343-residue chain is DNA-directed RNA polymerase subunit alpha (343 aa).

Residues Met1 to Asp243 form an alpha N-terminal domain (alpha-NTD) region. The segment at Glu261–Glu343 is alpha C-terminal domain (alpha-CTD).

The protein belongs to the RNA polymerase alpha chain family. As to quaternary structure, homodimer. The RNAP catalytic core consists of 2 alpha, 1 beta, 1 beta' and 1 omega subunit. When a sigma factor is associated with the core the holoenzyme is formed, which can initiate transcription.

It carries out the reaction RNA(n) + a ribonucleoside 5'-triphosphate = RNA(n+1) + diphosphate. DNA-dependent RNA polymerase catalyzes the transcription of DNA into RNA using the four ribonucleoside triphosphates as substrates. This chain is DNA-directed RNA polymerase subunit alpha, found in Desulfotalea psychrophila (strain LSv54 / DSM 12343).